We begin with the raw amino-acid sequence, 199 residues long: Histone deacetylase complex subunit SAP25 (199 aa).

2 stretches are compositionally biased toward polar residues: residues 151 to 163 and 184 to 199; these read QMSQ…SSSA and QGAD…THCP. The disordered stretch occupies residues 151 to 199; the sequence is QMSQGEPRPSSSAVGPPDHTSDPPSPCGSPSSSQGADLSLPQTPDTHCP.

As to quaternary structure, may be a component of the mSIN3A corepressor complex. Interacts with SIN3A. Interacts with HDAC2.

It localises to the nucleus. The protein resides in the cytoplasm. Its function is as follows. Involved in the transcriptional repression mediated by the mSIN3A but not the N-CoR corepressor complex. This chain is Histone deacetylase complex subunit SAP25 (SAP25), found in Homo sapiens (Human).